The primary structure comprises 776 residues: Calcium-independent phospholipase A2-gamma (776 aa).

N-linked (GlcNAc...) asparagine glycosylation is found at asparagine 4 and asparagine 157. Disordered stretches follow at residues 216–276 (KGKM…HPVS) and 306–334 (KLKSDPKSPPEEQEVSAKTEQAVNKDKKA). Basic and acidic residues-rich tracts occupy residues 221-239 (QTKEDKQLQDKPDLEERKS) and 247-263 (VADRPDSESPLEVKDKL). The 196-residue stretch at 439–634 (LTIDGGGTRG…LLNNPSALAL (196 aa)) folds into the PNPLA domain. The GXGXXG signature appears at 443–448 (GGGTRG). The helical transmembrane segment at 469-489 (LFDYICGVSTGAILAFMLGLF) threads the bilayer. Positions 475–479 (GVSTG) match the GXSXG motif. Serine 477 serves as the catalytic Nucleophile. Aspartate 621 (proton acceptor) is an active-site residue. Positions 621 to 623 (DGG) match the DGA/G motif. Residue lysine 730 is modified to N6-succinyllysine.

Expressed in myocardium (at protein level).

The protein resides in the endoplasmic reticulum membrane. Its subcellular location is the mitochondrion membrane. It is found in the peroxisome membrane. It carries out the reaction a 1,2-diacyl-sn-glycero-3-phosphocholine + H2O = a 1-acyl-sn-glycero-3-phosphocholine + a fatty acid + H(+). The enzyme catalyses a 1,2-diacyl-sn-glycero-3-phosphocholine + H2O = a 2-acyl-sn-glycero-3-phosphocholine + a fatty acid + H(+). It catalyses the reaction a 1,2-diacyl-sn-glycero-3-phosphoethanolamine + H2O = a 1-acyl-sn-glycero-3-phosphoethanolamine + a fatty acid + H(+). The catalysed reaction is a 1-O-(1Z-alkenyl)-2-acyl-sn-glycero-3-phosphocholine + H2O = a 1-O-(1Z-alkenyl)-sn-glycero-3-phosphocholine + a fatty acid + H(+). It carries out the reaction a 1-acyl-sn-glycero-3-phosphocholine + H2O = sn-glycerol 3-phosphocholine + a fatty acid + H(+). The enzyme catalyses 1-hexadecanoyl-2-(5Z,8Z,11Z,14Z-eicosatetraenoyl)-sn-glycero-3-phosphocholine + H2O = 2-(5Z,8Z,11Z,14Z)-eicosatetraenoyl-sn-glycero-3-phosphocholine + hexadecanoate + H(+). It catalyses the reaction 1-acyl-2-(9Z,12Z)-octadecadienoyl-sn-glycero-3-phosphocholine + H2O = a 1-acyl-sn-glycero-3-phosphocholine + (9Z,12Z)-octadecadienoate + H(+). The catalysed reaction is 1-acyl-2-(5Z,8Z,11Z,14Z-eicosatetraenoyl)-sn-glycero-3-phosphocholine + H2O = a 1-acyl-sn-glycero-3-phosphocholine + (5Z,8Z,11Z,14Z)-eicosatetraenoate + H(+). It carries out the reaction 1-hexadecanoyl-2-(5Z,8Z,11Z,14Z-eicosatetraenoyl)-sn-glycero-3-phosphocholine + H2O = 1-hexadecanoyl-sn-glycero-3-phosphocholine + (5Z,8Z,11Z,14Z)-eicosatetraenoate + H(+). The enzyme catalyses 1-octadecanoyl-2-(9Z-octadecenoyl)-sn-glycero-3-phosphocholine + H2O = 1-octadecanoyl-sn-glycero-3-phosphocholine + (9Z)-octadecenoate + H(+). It catalyses the reaction 1-hexadecanoyl-2-(9Z-octadecenoyl)-sn-glycero-3-phosphocholine + H2O = 1-hexadecanoyl-sn-glycero-3-phosphocholine + (9Z)-octadecenoate + H(+). The catalysed reaction is 1-hexadecanoyl-2-(9Z,12Z-octadecadienoyl)-sn-glycero-3-phosphocholine + H2O = (9Z,12Z)-octadecadienoate + 1-hexadecanoyl-sn-glycero-3-phosphocholine + H(+). It carries out the reaction 1-acyl-2-(9Z,12Z)-octadecadienoyl-sn-glycero-3-phosphoethanolamine + H2O = a 1-acyl-sn-glycero-3-phosphoethanolamine + (9Z,12Z)-octadecadienoate + H(+). The enzyme catalyses 1-acyl-2-(5Z,8Z,11Z,14Z)-eicosatetraenoyl-sn-glycero-3-phosphoethanolamine + H2O = a 1-acyl-sn-glycero-3-phosphoethanolamine + (5Z,8Z,11Z,14Z)-eicosatetraenoate + H(+). It catalyses the reaction 1-hexadecanoyl-2-(5Z,8Z,11Z,14Z-eicosatetraenoyl)-sn-glycero-3-phosphoethanolamine + H2O = 1-hexadecanoyl-sn-glycero-3-phosphoethanolamine + (5Z,8Z,11Z,14Z)-eicosatetraenoate + H(+). The catalysed reaction is 1-octadecanoyl-2-(9Z-octadecenoyl)-sn-glycero-3-phosphocholine + H2O = 2-(9Z-octadecenoyl)-sn-glycero-3-phosphocholine + octadecanoate + H(+). It carries out the reaction 1-hexadecanoyl-2-(4Z,7Z,10Z,13Z,16Z,19Z-docosahexaenoyl)-sn-glycero-3-phosphocholine + H2O = 2-(4Z,7Z,10Z,13Z,16Z,19Z-docosahexaenoyl)-sn-glycero-3-phosphocholine + hexadecanoate + H(+). The enzyme catalyses 1-O-(1Z)-hexadecenyl-2 (5Z,8Z,11Z,14Z)-eicosatetraenoyl-sn-glycero-3-phosphocholine + H2O = 1-(1Z-hexadecenyl)-sn-glycero-3-phosphocholine + (5Z,8Z,11Z,14Z)-eicosatetraenoate + H(+). It catalyses the reaction 1-O-(1Z-hexadecenyl)-2-(9Z-octadecenoyl)-sn-glycero-3-phosphocholine + H2O = 1-(1Z-hexadecenyl)-sn-glycero-3-phosphocholine + (9Z)-octadecenoate + H(+). The catalysed reaction is 1-hexadecanoyl-sn-glycero-3-phosphocholine + H2O = sn-glycerol 3-phosphocholine + hexadecanoate + H(+). It carries out the reaction 1',3'-bis-[1,2-di-(9Z,12Z-octadecadienoyl)-sn-glycero-3-phospho]-glycerol + H2O = 1'-[1,2-di-(9Z,12Z-octadecadienoyl)-sn-glycero-3-phospho]-3'-[1-(9Z,12Z-octadecadienoyl)-sn-glycero-3-phospho]-glycerol + (9Z,12Z)-octadecadienoate + H(+). The enzyme catalyses 1'-[1-acyl-2-(9-hydroxy-(10E,12Z)-octadecadienoyl)-sn-glycero-3-phospho]-3'-[1,2-diacyl-sn-glycero-3-phospho]-glycerol + H2O = 9-hydroxy-(10E,12Z)-octadecadienoate + 1'-[1,2-diacyl-sn-glycero-3-phospho],3'-[1-acyl-sn-glycero-3-phospho]-glycerol + H(+). It participates in phospholipid metabolism. With respect to regulation, calcium-independent phospholipase. In terms of biological role, calcium-independent and membrane-bound phospholipase, that catalyzes the esterolytic cleavage of fatty acids from glycerophospholipids to yield free fatty acids and lysophospholipids, hence regulating membrane physical properties and the release of lipid second messengers and growth factors. Hydrolyzes phosphatidylethanolamine, phosphatidylcholine and probably phosphatidylinositol with a possible preference for the former. Also has a broad substrate specificity in terms of fatty acid moieties, hydrolyzing saturated and mono-unsaturated fatty acids at nearly equal rates from either the sn-1 or sn-2 position in diacyl phosphatidylcholine. However, has a weak activity toward polyunsaturated fatty acids at the sn-2 position, and thereby favors the production of 2-arachidonoyl lysophosphatidylcholine, a key branch point metabolite in eicosanoid signaling. On the other hand, can produce arachidonic acid from the sn-1 position of diacyl phospholipid and from the sn-2 position of arachidonate-containing plasmalogen substrates. Therefore, plays an important role in the mobilization of arachidonic acid in response to cellular stimuli and the generation of lipid second messengers. Can also hydrolyze lysophosphatidylcholine. In the mitochondrial compartment, catalyzes the hydrolysis and release of oxidized aliphatic chains from cardiolipin and integrates mitochondrial bioenergetics and signaling. It is essential for maintaining efficient bioenergetic mitochondrial function through tailoring mitochondrial membrane lipid metabolism and composition. The sequence is that of Calcium-independent phospholipase A2-gamma from Mus musculus (Mouse).